Here is a 30-residue protein sequence, read N- to C-terminus: Glucagon-like peptide (30 aa).

Residue arginine 30 is modified to Arginine amide.

It belongs to the glucagon family.

The protein localises to the secreted. This chain is Glucagon-like peptide, found in Anguilla anguilla (European freshwater eel).